A 2271-amino-acid chain; its full sequence is Serine-rich adhesin for platelets (2271 aa).

Residues 1–89 form the signal peptide; that stretch reads MSKRQKAFHD…VNMLHDQQAF (89 aa). The segment at 90–230 is serine-rich repeat region 1, SRR1; that stretch reads AASDAPLTSE…KTSTTSTSTA (141 aa). Residues 100-111 are compositionally biased toward polar residues; sequence LNTQSETVGNQN. 3 disordered regions span residues 100–229, 751–791, and 806–2243; these read LNTQ…STST, NSMS…VVST, and SVSA…GLLG. Residues 112–128 are compositionally biased toward low complexity; sequence STTIEASTSTADSTSVT. Positions 129–140 are enriched in polar residues; that stretch reads KNSSSVQTSNSD. Over residues 150–229 the composition is skewed to low complexity; it reads VTSTTNSTSN…NKTSTTSTST (80 aa). Residues 231 to 751 are non-repeat region (NRR); it reads PVKLRTFSRL…TTFKYEVTRN (521 aa). 3 stretches are compositionally biased toward low complexity: residues 752–791, 806–1392, and 1402–2214; these read SMSDSVSTSGSTQQSQSVSTSKADSQSASTSTSGSIVVST, SVSA…LSLS, and SNSA…ATSE. A serine-rich repeat region 2, SRR2 region spans residues 752–2232; the sequence is SMSDSVSTSG…AQSEKRLPDT (1481 aa). Positions 2229–2233 match the LPXTG sorting signal motif; that stretch reads LPDTG. The residue at position 2232 (Thr2232) is a Pentaglycyl murein peptidoglycan amidated threonine. A propeptide spans 2233–2271 (removed by sortase); that stretch reads GDSIKQNGLLGGVMTLLVGLGLMKRKKKKDENDQDDSQA.

Belongs to the serine-rich repeat protein (SRRP) family. Proteolytically cleaved by a metalloprotease. In terms of processing, glycosylated. It is probable that most of the Ser residues in SSR1 and SSR2 are O-GlcNAcylated. Sequential glycosylation by sugar transferases are able to generate complex sugar polymorphisms.

It localises to the secreted. Its subcellular location is the cell wall. Mediates binding to human platelets, possibly through a receptor-ligand interaction. Probably associated with virulence in endovascular infection. This chain is Serine-rich adhesin for platelets (sraP), found in Staphylococcus aureus (strain USA300).